Consider the following 213-residue polypeptide: Probable transaldolase (213 aa).

Residue lysine 83 is the Schiff-base intermediate with substrate of the active site.

Belongs to the transaldolase family. Type 3B subfamily.

Its subcellular location is the cytoplasm. The catalysed reaction is D-sedoheptulose 7-phosphate + D-glyceraldehyde 3-phosphate = D-erythrose 4-phosphate + beta-D-fructose 6-phosphate. The protein operates within carbohydrate degradation; pentose phosphate pathway; D-glyceraldehyde 3-phosphate and beta-D-fructose 6-phosphate from D-ribose 5-phosphate and D-xylulose 5-phosphate (non-oxidative stage): step 2/3. In terms of biological role, transaldolase is important for the balance of metabolites in the pentose-phosphate pathway. This Desulfitobacterium hafniense (strain DSM 10664 / DCB-2) protein is Probable transaldolase.